The primary structure comprises 115 residues: Holo-[acyl-carrier-protein] synthase (115 aa).

Mg(2+) contacts are provided by Asp-8 and Glu-50.

Belongs to the P-Pant transferase superfamily. AcpS family. Mg(2+) serves as cofactor.

Its subcellular location is the cytoplasm. It carries out the reaction apo-[ACP] + CoA = holo-[ACP] + adenosine 3',5'-bisphosphate + H(+). Transfers the 4'-phosphopantetheine moiety from coenzyme A to a Ser of acyl-carrier-protein. The sequence is that of Holo-[acyl-carrier-protein] synthase from Arthrobacter sp. (strain FB24).